A 58-amino-acid polypeptide reads, in one-letter code: UPF0339 protein Msl4696 (58 aa).

This sequence belongs to the UPF0339 family.

This Mesorhizobium japonicum (strain LMG 29417 / CECT 9101 / MAFF 303099) (Mesorhizobium loti (strain MAFF 303099)) protein is UPF0339 protein Msl4696.